Here is a 1271-residue protein sequence, read N- to C-terminus: Chitin synthase 4 (1271 aa).

2 disordered regions span residues 1–45 and 58–117; these read MPPT…SFDH and PNHP…ERPS. Positions 21 to 30 are enriched in polar residues; sequence APDTQESSPA. Transmembrane regions (helical) follow at residues 165 to 185 and 201 to 221; these read WWIR…LVHL and LAIF…IIFF. Asparagine 407 carries an N-linked (GlcNAc...) asparagine glycan. A helical transmembrane segment spans residues 473 to 493; sequence LLLAFSIILIATIASKFLAAL. 2 N-linked (GlcNAc...) asparagine glycosylation sites follow: asparagine 713 and asparagine 836. The next 3 helical transmembrane spans lie at 867–887, 894–914, and 919–939; these read LLGT…VIVV, IPVI…LIFI, and FMLI…SVFL. A disordered region spans residues 999 to 1081; it reads HSESPAPSEK…DKSFIRGSKP (83 aa). The span at 1027–1037 shows a compositional bias: polar residues; it reads RSPSFHSSASE. N-linked (GlcNAc...) asparagine glycans are attached at residues asparagine 1055 and asparagine 1161. Positions 1213–1269 constitute a DEK-C domain; sequence EVQDEEVLDKLKTWLSKQDLMSVTKRQTREAIYTLFPNAGLQNRAGWLNEQIDKILS.

The protein belongs to the chitin synthase family.

Its subcellular location is the cell membrane. It catalyses the reaction [(1-&gt;4)-N-acetyl-beta-D-glucosaminyl](n) + UDP-N-acetyl-alpha-D-glucosamine = [(1-&gt;4)-N-acetyl-beta-D-glucosaminyl](n+1) + UDP + H(+). Its function is as follows. Polymerizes chitin, a structural polymer of the cell wall and septum, by transferring the sugar moiety of UDP-GlcNAc to the non-reducing end of the growing chitin polymer. Produces a large proportion of the chitin that is not deacetylated to chitosan. This chain is Chitin synthase 4, found in Cryptococcus neoformans var. grubii serotype A (strain H99 / ATCC 208821 / CBS 10515 / FGSC 9487) (Filobasidiella neoformans var. grubii).